We begin with the raw amino-acid sequence, 509 residues long: Photosystem II CP47 reaction center protein (509 aa).

Helical transmembrane passes span 21 to 36 (AVHLMHTALVAGWAGS), 101 to 115 (IVLSGMLFLAAIWHW), 140 to 156 (GIHLLLSSLLCFGFGAF), 203 to 218 (IAAGTVGILAGVFHLT), 237 to 252 (VLSSSISAVFFSAFIT), and 457 to 472 (NFALIFFFGHLWHGSR).

Belongs to the PsbB/PsbC family. PsbB subfamily. PSII is composed of 1 copy each of membrane proteins PsbA, PsbB, PsbC, PsbD, PsbE, PsbF, PsbH, PsbI, PsbJ, PsbK, PsbL, PsbM, PsbT, PsbX, PsbY, PsbZ, Psb30/Ycf12, at least 3 peripheral proteins of the oxygen-evolving complex and a large number of cofactors. It forms dimeric complexes. The cofactor is Binds multiple chlorophylls. PSII binds additional chlorophylls, carotenoids and specific lipids..

Its subcellular location is the plastid. The protein resides in the chloroplast thylakoid membrane. One of the components of the core complex of photosystem II (PSII). It binds chlorophyll and helps catalyze the primary light-induced photochemical processes of PSII. PSII is a light-driven water:plastoquinone oxidoreductase, using light energy to abstract electrons from H(2)O, generating O(2) and a proton gradient subsequently used for ATP formation. This Porphyra purpurea (Red seaweed) protein is Photosystem II CP47 reaction center protein.